The chain runs to 505 residues: Activin receptor type-1B (505 aa).

The signal sequence occupies residues 1 to 23 (MAESAGASSFFPLVVLLLAGSGG). Residues 24 to 126 (SGPRGIQALL…AHPSMWGPVE (103 aa)) are Extracellular-facing. The N-linked (GlcNAc...) asparagine glycan is linked to N43. A helical transmembrane segment spans residues 127–149 (LVGIIAGPVFLLFLIIIIVFLVI). Residues 150 to 505 (NYHQRVYHNR…QLSVQEDVKI (356 aa)) lie on the Cytoplasmic side of the membrane. The GS domain occupies 177–206 (KTLQDLVYDLSTSGSGSGLPLFVQRTVART). One can recognise a Protein kinase domain in the interval 207-497 (IVLQEIIGKG…LRIKKTLSQL (291 aa)). Residues 213-221 (IGKGRFGEV) and K234 each bind ATP. D335 serves as the catalytic Proton acceptor. Y380 is subject to Phosphotyrosine.

Belongs to the protein kinase superfamily. TKL Ser/Thr protein kinase family. TGFB receptor subfamily. As to quaternary structure, forms an activin receptor complex with activin receptor type-2 (ACVR2A or ACVR2B). Part of a complex consisting of MAGI2/ARIP1, ACVR2A, ACVR1B and SMAD3. Interacts with SMAD2 and SMAD3. Interacts with SMAD7. Interacts with FKBP1A. Interacts with IGSF1. Interacts with CRIPTO. Interacts with TDP2. Interacts with TSC22D1/TSC-22. Post-translationally, autophosphorylated. Phosphorylated by activin receptor type-2 (ACVR2A or ACVR2B) in response to activin-binding at serine and threonine residues in the GS domain. Phosphorylation of ACVR1B by activin receptor type-2 regulates association with SMAD7. In terms of processing, ubiquitinated. Level of ubiquitination is regulated by the SMAD7-SMURF1 complex. Ubiquitinated.

The protein localises to the cell membrane. The catalysed reaction is L-threonyl-[receptor-protein] + ATP = O-phospho-L-threonyl-[receptor-protein] + ADP + H(+). It carries out the reaction L-seryl-[receptor-protein] + ATP = O-phospho-L-seryl-[receptor-protein] + ADP + H(+). With respect to regulation, activin receptor type-2 (ACVR2A or ACVR2B) activates the type-1 receptor through phosphorylation of its regulatory GS domain. Its function is as follows. Transmembrane serine/threonine kinase activin type-1 receptor forming an activin receptor complex with activin receptor type-2 (ACVR2A or ACVR2B). Transduces the activin signal from the cell surface to the cytoplasm and is thus regulating a many physiological and pathological processes including neuronal differentiation and neuronal survival, hair follicle development and cycling, FSH production by the pituitary gland, wound healing, extracellular matrix production, immunosuppression and carcinogenesis. Activin is also thought to have a paracrine or autocrine role in follicular development in the ovary. Within the receptor complex, type-2 receptors (ACVR2A and/or ACVR2B) act as a primary activin receptors whereas the type-1 receptors like ACVR1B act as downstream transducers of activin signals. Activin binds to type-2 receptor at the plasma membrane and activates its serine-threonine kinase. The activated receptor type-2 then phosphorylates and activates the type-1 receptor such as ACVR1B. Once activated, the type-1 receptor binds and phosphorylates the SMAD proteins SMAD2 and SMAD3, on serine residues of the C-terminal tail. Soon after their association with the activin receptor and subsequent phosphorylation, SMAD2 and SMAD3 are released into the cytoplasm where they interact with the common partner SMAD4. This SMAD complex translocates into the nucleus where it mediates activin-induced transcription. Inhibitory SMAD7, which is recruited to ACVR1B through FKBP1A, can prevent the association of SMAD2 and SMAD3 with the activin receptor complex, thereby blocking the activin signal. Activin signal transduction is also antagonized by the binding to the receptor of inhibin-B via the IGSF1 inhibin coreceptor. ACVR1B also phosphorylates TDP2. This Mus musculus (Mouse) protein is Activin receptor type-1B (Acvr1b).